The chain runs to 206 residues: Large ribosomal subunit protein uL4 (206 aa).

The protein belongs to the universal ribosomal protein uL4 family. In terms of assembly, part of the 50S ribosomal subunit.

Its function is as follows. One of the primary rRNA binding proteins, this protein initially binds near the 5'-end of the 23S rRNA. It is important during the early stages of 50S assembly. It makes multiple contacts with different domains of the 23S rRNA in the assembled 50S subunit and ribosome. Functionally, forms part of the polypeptide exit tunnel. This chain is Large ribosomal subunit protein uL4, found in Afipia carboxidovorans (strain ATCC 49405 / DSM 1227 / KCTC 32145 / OM5) (Oligotropha carboxidovorans).